The following is a 155-amino-acid chain: SsrA-binding protein (155 aa).

The protein belongs to the SmpB family.

It localises to the cytoplasm. Functionally, required for rescue of stalled ribosomes mediated by trans-translation. Binds to transfer-messenger RNA (tmRNA), required for stable association of tmRNA with ribosomes. tmRNA and SmpB together mimic tRNA shape, replacing the anticodon stem-loop with SmpB. tmRNA is encoded by the ssrA gene; the 2 termini fold to resemble tRNA(Ala) and it encodes a 'tag peptide', a short internal open reading frame. During trans-translation Ala-aminoacylated tmRNA acts like a tRNA, entering the A-site of stalled ribosomes, displacing the stalled mRNA. The ribosome then switches to translate the ORF on the tmRNA; the nascent peptide is terminated with the 'tag peptide' encoded by the tmRNA and targeted for degradation. The ribosome is freed to recommence translation, which seems to be the essential function of trans-translation. The polypeptide is SsrA-binding protein (Streptococcus pyogenes serotype M18 (strain MGAS8232)).